The following is a 103-amino-acid chain: Ig lambda chain C region (103 aa).

One can recognise an Ig-like domain in the interval 6 to 99; sequence PTITLFPPSK…NGTSITKTLK (94 aa). Cys-28 and Cys-85 are joined by a disulfide.

The chain is Ig lambda chain C region from Gallus gallus (Chicken).